A 334-amino-acid chain; its full sequence is Phospholipase A1 1 (334 aa).

An N-terminal signal peptide occupies residues 1–23; it reads MMNLKYLLFFCLVQALHYCYAYG. The propeptide occupies 24-33; it reads DPSLSNELDR. Cys37 and Cys120 are oxidised to a cystine. Residue Ser170 is the Nucleophile of the active site. Catalysis depends on Asp198, which acts as the Charge relay system. Cystine bridges form between Cys209-Cys214 and Cys252-Cys261. Catalysis depends on His263, which acts as the Charge relay system. Intrachain disulfides connect Cys278–Cys302, Cys279–Cys327, and Cys295–Cys300.

This sequence belongs to the AB hydrolase superfamily. Lipase family. Post-translationally, not glycosylated. In terms of tissue distribution, expressed by the venom gland.

It localises to the secreted. It catalyses the reaction a 1,2-diacyl-sn-glycero-3-phosphocholine + H2O = a 2-acyl-sn-glycero-3-phosphocholine + a fatty acid + H(+). Catalyzes the hydrolysis of phosphatidylcholine with phospholipase A1 activity (3.6 U/ml). May act as an allergen and induce hemolytic activity. In vivo, a mixture of this protein and Ves a 1.02 is able to paralyze crickets. The polypeptide is Phospholipase A1 1 (Vespa affinis (Lesser banded hornet)).